The chain runs to 277 residues: MTPRPIRHQYEDLMRHVFEHGTAKGDRTGTGTKSVFGHQMRFDLSEGFPLVTTKKVHLKSIILELLWFLRGDSNVRWLQERGCTIWDEWARDDGSLGPVYGVQWRSWPTPDGGHIDQIQQVIDTLKTHPDSRRIIVSAWNVAELDRMALMPCHAFFQFYVAPSQVAGEPGKLSCQLYQRSADIFLGVPFNIASYALLTHMVAQQCDLQVGDFIWTGGDCHIYSNHFEQVRTQLARQPYAYPTLQIKRRPASIFDYAYEDFEVVGYEHHPAIKAPVAV.

Residue R27 participates in dUMP binding. H57 serves as a coordination point for (6R)-5,10-methylene-5,6,7,8-tetrahydrofolate. Residue 132–133 (RR) participates in dUMP binding. C152 functions as the Nucleophile in the catalytic mechanism. DUMP contacts are provided by residues 179–182 (RSAD), N190, and 220–222 (HIY). D182 contacts (6R)-5,10-methylene-5,6,7,8-tetrahydrofolate. A276 is a binding site for (6R)-5,10-methylene-5,6,7,8-tetrahydrofolate.

Belongs to the thymidylate synthase family. Bacterial-type ThyA subfamily. In terms of assembly, homodimer.

It is found in the cytoplasm. The enzyme catalyses dUMP + (6R)-5,10-methylene-5,6,7,8-tetrahydrofolate = 7,8-dihydrofolate + dTMP. Its pathway is pyrimidine metabolism; dTTP biosynthesis. Catalyzes the reductive methylation of 2'-deoxyuridine-5'-monophosphate (dUMP) to 2'-deoxythymidine-5'-monophosphate (dTMP) while utilizing 5,10-methylenetetrahydrofolate (mTHF) as the methyl donor and reductant in the reaction, yielding dihydrofolate (DHF) as a by-product. This enzymatic reaction provides an intracellular de novo source of dTMP, an essential precursor for DNA biosynthesis. This is Thymidylate synthase from Acidovorax sp. (strain JS42).